We begin with the raw amino-acid sequence, 801 residues long: Probable inorganic carbon transporter subunit DabA (801 aa).

Residues Cys298, Asp300, His481, and Cys496 each coordinate Zn(2+). A disordered region spans residues 575-596 (RENAAAERAESMGSDASSGVSE).

The protein belongs to the inorganic carbon transporter (TC 9.A.2) DabA family. Forms a complex with DabB. Requires Zn(2+) as cofactor.

It is found in the cell membrane. Its function is as follows. Part of an energy-coupled inorganic carbon pump. In Haloarcula marismortui (strain ATCC 43049 / DSM 3752 / JCM 8966 / VKM B-1809) (Halobacterium marismortui), this protein is Probable inorganic carbon transporter subunit DabA.